We begin with the raw amino-acid sequence, 189 residues long: Interferon alpha-1 (189 aa).

The first 23 residues, 1–23 (MARLCAFLMVLAVLSYWPTCSLG), serve as a signal peptide directing secretion. Intrachain disulfides connect cysteine 24/cysteine 122 and cysteine 52/cysteine 162. Asparagine 101 carries an N-linked (GlcNAc...) asparagine glycan.

It belongs to the alpha/beta interferon family. Interacts with CR2. Post-translationally, glycosylated.

The protein localises to the secreted. Its function is as follows. Produced by macrophages, IFN-alpha have antiviral activities. Interferon stimulates the production of two enzymes: a protein kinase and an oligoadenylate synthetase. This chain is Interferon alpha-1 (Ifna1), found in Mus musculus (Mouse).